The chain runs to 123 residues: Small ribosomal subunit protein uS12cz/uS12cy (123 aa).

This sequence belongs to the universal ribosomal protein uS12 family. In terms of assembly, part of the 30S ribosomal subunit.

The protein localises to the plastid. The protein resides in the chloroplast. Functionally, with S4 and S5 plays an important role in translational accuracy. Located at the interface of the 30S and 50S subunits. The polypeptide is Small ribosomal subunit protein uS12cz/uS12cy (rps12-A) (Gossypium hirsutum (Upland cotton)).